The chain runs to 236 residues: Uridylate kinase (236 aa).

Lysine 9–glycine 12 contacts ATP. Glycine 51 provides a ligand contact to UMP. Residues glycine 52 and arginine 56 each contribute to the ATP site. UMP-binding positions include aspartate 71 and threonine 132–threonine 139. ATP contacts are provided by tyrosine 166 and aspartate 169.

The protein belongs to the UMP kinase family. Homohexamer.

It is found in the cytoplasm. It carries out the reaction UMP + ATP = UDP + ADP. It functions in the pathway pyrimidine metabolism; CTP biosynthesis via de novo pathway; UDP from UMP (UMPK route): step 1/1. Its activity is regulated as follows. Inhibited by UTP. Catalyzes the reversible phosphorylation of UMP to UDP. The polypeptide is Uridylate kinase (Mycoplasmoides gallisepticum (strain R(low / passage 15 / clone 2)) (Mycoplasma gallisepticum)).